We begin with the raw amino-acid sequence, 67 residues long: Large ribosomal subunit protein eL24 (67 aa).

4 residues coordinate Zn(2+): Cys-7, Cys-10, Cys-33, and Cys-37. The C4-type zinc finger occupies 7-37; sequence CSYCGKPFEPGTGKMFVRNDGRVLFFCSRKC.

Belongs to the eukaryotic ribosomal protein eL24 family. As to quaternary structure, part of the 50S ribosomal subunit. Forms a cluster with proteins L3 and L14. It depends on Zn(2+) as a cofactor.

Functionally, binds to the 23S rRNA. The protein is Large ribosomal subunit protein eL24 of Pyrococcus abyssi (strain GE5 / Orsay).